Consider the following 473-residue polypeptide: Serine carboxypeptidase-like 25 (473 aa).

Positions 1–22 (MAMAKLAIFTTLMAILVMTSQG) are cleaved as a signal peptide. N-linked (GlcNAc...) asparagine glycosylation is found at N46 and N143. Intrachain disulfides connect C92–C358, C252–C263, and C288–C326. The active site involves S185. Residues N289, N299, N347, and N367 are each glycosylated (N-linked (GlcNAc...) asparagine). Catalysis depends on residues D395 and H447.

Belongs to the peptidase S10 family. Ubiquitous.

The protein localises to the secreted. Probable carboxypeptidase. The polypeptide is Serine carboxypeptidase-like 25 (SCPL25) (Arabidopsis thaliana (Mouse-ear cress)).